Here is a 619-residue protein sequence, read N- to C-terminus: MPKLRSATSTEGRNMAGARALWRATGVKENDFGKPIIAIANSFTQFVPGHVHLKNMGSLVAGAIEEAGGIAKEFNTIAVDDGIAMGHGGMLYSLPSRELIADSVEYMVNAHCADALVCISNCDKITPGMLMAALRLNIPVVFVSGGPMEAGKTKLSDQIIKLDLVDAMIAGADSNVSDEDSKQIERSACPTCGSCSGMFTANSMNCLTEALGLSLPGNGSMLATHEDRRELFLEAGRRVMMLAERYYKHDDETALPRNIASFKSFENAMVLDVAMGGSSNTVLHLVAAAQEAEIDFTMADIDRISRLVPHLCKVAPSTPKYHMEDVHRAGGVMGILGELDRAGLIHNDVPHVAADNGGDLKSVLAKYDIKQTNDPDVIRFFSAGPAGIPTTKAFSQNCRWDSVDDDRENGCIRSREFAFSQEGGLAVLSGNVAVDGCIVKTAGVDESNLTFVGSARVYESQDDAVAGILGGEVVEGDVVVIRYEGPKGGPGMQEMLYPTTYLKSRGLGAKCALITDGRFSGGTSGLSIGHVSPEAASGGTIALIENGDQIAIDIPKRSIQLNVSEAELTQRRTAMDAKGPLGWKPVSRERYVSLALKAYALLATSADKGAVRDRTKLEG.

Residue aspartate 81 coordinates Mg(2+). Cysteine 122 lines the [2Fe-2S] cluster pocket. 2 residues coordinate Mg(2+): aspartate 123 and lysine 124. Lysine 124 is modified (N6-carboxylysine). Residue cysteine 195 coordinates [2Fe-2S] cluster. Glutamate 494 is a Mg(2+) binding site. Residue serine 520 is the Proton acceptor of the active site.

This sequence belongs to the IlvD/Edd family. Homodimer. [2Fe-2S] cluster serves as cofactor. It depends on Mg(2+) as a cofactor.

It carries out the reaction (2R)-2,3-dihydroxy-3-methylbutanoate = 3-methyl-2-oxobutanoate + H2O. The catalysed reaction is (2R,3R)-2,3-dihydroxy-3-methylpentanoate = (S)-3-methyl-2-oxopentanoate + H2O. The protein operates within amino-acid biosynthesis; L-isoleucine biosynthesis; L-isoleucine from 2-oxobutanoate: step 3/4. It participates in amino-acid biosynthesis; L-valine biosynthesis; L-valine from pyruvate: step 3/4. Functionally, functions in the biosynthesis of branched-chain amino acids. Catalyzes the dehydration of (2R,3R)-2,3-dihydroxy-3-methylpentanoate (2,3-dihydroxy-3-methylvalerate) into 2-oxo-3-methylpentanoate (2-oxo-3-methylvalerate) and of (2R)-2,3-dihydroxy-3-methylbutanoate (2,3-dihydroxyisovalerate) into 2-oxo-3-methylbutanoate (2-oxoisovalerate), the penultimate precursor to L-isoleucine and L-valine, respectively. This is Dihydroxy-acid dehydratase from Shewanella frigidimarina (strain NCIMB 400).